The chain runs to 330 residues: Ribosome production factor 1 (330 aa).

2 disordered regions span residues 1 to 32 (MKAV…FPPT) and 53 to 83 (EEKR…KEVP). A compositionally biased stretch (basic residues) spans 55 to 70 (KRKKRMELKKKKKKER). Over residues 71-83 (KALDDKAPPKEVP) the composition is skewed to basic and acidic residues. A Brix domain is found at 123 to 306 (PKVLITTSDR…LRSLQKGTFD (184 aa)). An RNA-binding region spans residues 284–301 (VGIQELGPRFTLKLRSLQ).

It localises to the nucleus. It is found in the nucleolus. May be required for ribosome biogenesis. The chain is Ribosome production factor 1 (rpf1) from Danio rerio (Zebrafish).